Here is a 663-residue protein sequence, read N- to C-terminus: Sodium/potassium/calcium exchanger 1 (663 aa).

Over S32–Q128 the chain is Extracellular. N-linked (GlcNAc...) asparagine glycosylation is found at N59, N66, and N100. The helical transmembrane segment at G129–C149 threads the bilayer. Residues D150–A173 lie on the Cytoplasmic side of the membrane. The Alpha-1 repeat unit spans residues V170 to F210. The chain crosses the membrane as a helical span at residues T174 to I194. Residues S195–G200 lie on the Extracellular side of the membrane. The helical transmembrane segment at I201–L221 threads the bilayer. Topologically, residues F222–H228 are cytoplasmic. The chain crosses the membrane as a helical span at residues L229–L253. Topologically, residues D254–W259 are extracellular. Residues W260–M276 traverse the membrane as a helical segment. The Cytoplasmic segment spans residues K277–K471. Disordered regions lie at residues K308–N343 and L384–W465. A compositionally biased stretch (basic and acidic residues) spans D316 to K325. Composition is skewed to polar residues over residues Q327–N343 and A399–S412. S337 is subject to Phosphoserine. The span at E413–T423 shows a compositional bias: basic and acidic residues. Acidic residues predominate over residues D434 to L461. The chain crosses the membrane as a helical span at residues Q472–V492. Over R493 to K499 the chain is Extracellular. Residues F500–V520 form a helical membrane-spanning segment. Topologically, residues W521–E535 are cytoplasmic. Residues I536–I556 form a helical membrane-spanning segment. The stretch at A543–N574 is one Alpha-2 repeat. Residues V557–N574 lie on the Extracellular side of the membrane. The helical transmembrane segment at I575–F595 threads the bilayer. Residues S596–G604 are Cytoplasmic-facing. A helical transmembrane segment spans residues L605–L625. Residues C626–K632 are Extracellular-facing. Residues I633 to E653 form a helical membrane-spanning segment. The Cytoplasmic segment spans residues D654–V663.

It belongs to the Ca(2+):cation antiporter (CaCA) (TC 2.A.19) family. SLC24A subfamily. The uncleaved signal sequence is required for efficient membrane targeting and proper membrane integration and topology. Retinal rods. Localizes to the inner segment of rod photoreceptors.

Its subcellular location is the cell membrane. The catalysed reaction is Ca(2+)(out) + K(+)(out) + 4 Na(+)(in) = Ca(2+)(in) + K(+)(in) + 4 Na(+)(out). Its function is as follows. Calcium, potassium:sodium antiporter that transports 1 Ca(2+) and 1 K(+) in exchange for 4 Na(+). Critical component of the visual transduction cascade, controlling the calcium concentration of outer segments during light and darkness. Light causes a rapid lowering of cytosolic free calcium in the outer segment of both retinal rod and cone photoreceptors and the light-induced lowering of calcium is caused by extrusion via this protein which plays a key role in the process of light adaptation. This is Sodium/potassium/calcium exchanger 1 (SLC24A1) from Gallus gallus (Chicken).